The primary structure comprises 680 residues: Putative cyclin-dependent serine/threonine-protein kinase DDB_G0272797/DDB_G0274007 (680 aa).

Residues 4-381 enclose the Protein kinase domain; it reads YIILSKCGQG…SLEALEHPWF (378 aa). Residues 10 to 18 and lysine 33 contribute to the ATP site; that span reads CGQGTYGSV. Aspartate 125 acts as the Proton acceptor in catalysis. Disordered regions lie at residues 243–299, 409–444, 483–507, and 597–680; these read QQQQ…LQSP, RQLQQQQHHHQQQQQQQQQQQQQQQPHQQQLIQRQH, LAQHQQYNSQQHQQHHQQQHQQHQQ, and QQQQ…KSNG. The segment covering 257–286 has biased composition (low complexity); the sequence is NNNNNNNNNNNNNNNNNNNNNNNNNNNNNN. The segment covering 287-297 has biased composition (polar residues); it reads KYNNISTSCLQ. 3 stretches are compositionally biased toward low complexity: residues 410–444, 483–494, and 597–616; these read QLQQQQHHHQQQQQQQQQQQQQQQPHQQQLIQRQH, LAQHQQYNSQQH, and QQQQHQYQPPQQYNHQPPQH. The span at 617–631 shows a compositional bias: basic residues; the sequence is QHQHQHQHQHQHQHQ. The segment covering 632 to 642 has biased composition (low complexity); the sequence is HQPQPQHQHQP. A compositionally biased stretch (pro residues) spans 643 to 655; that stretch reads QPQPQPTPTPTPT. The span at 656–680 shows a compositional bias: low complexity; sequence STPTTTTIPPTITTTIQPTISKSNG.

It belongs to the protein kinase superfamily. CMGC Ser/Thr protein kinase family. CDC2/CDKX subfamily.

It catalyses the reaction L-seryl-[protein] + ATP = O-phospho-L-seryl-[protein] + ADP + H(+). The enzyme catalyses L-threonyl-[protein] + ATP = O-phospho-L-threonyl-[protein] + ADP + H(+). This chain is Putative cyclin-dependent serine/threonine-protein kinase DDB_G0272797/DDB_G0274007, found in Dictyostelium discoideum (Social amoeba).